We begin with the raw amino-acid sequence, 421 residues long: POU domain, class 4, transcription factor 1 (421 aa).

The short motif at 57-66 (RAEALAAVDI) is the POU-IV box element. 2 disordered regions span residues 94-117 (STVP…GDLL) and 133-200 (GAGA…GLGH). A compositionally biased stretch (basic residues) spans 99–108 (AHHHHHHHHH). Gly residues predominate over residues 133–186 (GAGAAGGGGGAHDGPGGGGGPGGGGGPGGGGPGGGGGGGGPGGGGGGPGGGLLG). Residues 262 to 339 (DSDTDPRELE…ILQAWLEEAE (78 aa)) enclose the POU-specific domain. A DNA-binding region (homeobox) is located at residues 357–416 (KKRKRTSIAAPEKRSLEAYFAVQPRPSSEKIAAIAEKLDLKKNVVRVWFCNQRQKQKRMK).

The protein belongs to the POU transcription factor family. Class-4 subfamily. In terms of assembly, interacts (via N-terminus) with RIT2; the interaction controls POU4F1 transactivation activity on some neuronal target genes. Isoform 1 interacts with POU4F2 isoform 2; this interaction inhibits both POU4F1 DNA-binding and transcriptional activities. Isoform 1 interacts (C-terminus) with ESR1 (via DNA-binding domain); this interaction decreases the estrogen receptor ESR1 transcriptional activity in a DNA- and ligand 17-beta-estradiol-independent manner. As to expression, expressed in mature osteoclasts (at protein level). Brain, peripheral sensory nervous system and retina. In the adult nervous system, predominates in the medial habenula, superficial gray of the superior colliculus, red nucleus, mesencephalic nucleus of the trigeminal ganglion, nucleus ambiguus, inferior olivary nucleus, and peripheral sensory ganglia.

The protein localises to the nucleus. It localises to the cytoplasm. Multifunctional transcription factor with different regions mediating its different effects. Acts by binding (via its C-terminal domain) to sequences related to the consensus octamer motif 5'-ATGCAAAT-3' in the regulatory regions of its target genes. Regulates the expression of specific genes involved in differentiation and survival within a subset of neuronal lineages. It has been shown that activation of some of these genes requires its N-terminal domain, maybe through a neuronal-specific cofactor. Activates BCL2 expression and protects neuronal cells from apoptosis (via the N-terminal domain). Induces neuronal process outgrowth and the coordinate expression of genes encoding synaptic proteins. Exerts its major developmental effects in somatosensory neurons and in brainstem nuclei involved in motor control. Stimulates the binding affinity of the nuclear estrogene receptor ESR1 to DNA estrogen response element (ERE), and hence modulates ESR1-induced transcriptional activity. May positively regulate POU4F2 and POU4F3. Regulates dorsal root ganglion sensory neuron specification and axonal projection into the spinal cord. Plays a role in TNFSF11-mediated terminal osteoclast differentiation. Negatively regulates its own expression interacting directly with a highly conserved autoregulatory domain surrounding the transcription initiation site. Functionally, able to act as transcription factor, cannot regulate the expression of the same subset of genes than isoform 1. Does not have antiapoptotic effect on neuronal cells. The chain is POU domain, class 4, transcription factor 1 (Pou4f1) from Mus musculus (Mouse).